A 343-amino-acid chain; its full sequence is 3-isopropylmalate dehydrogenase (343 aa).

Substrate-binding residues include Arg94, Arg104, Arg128, and Asp218. Mg(2+) contacts are provided by Asp218, Asp242, and Asp246. 278–290 is an NAD(+) binding site; it reads GSAPDIAGQNKAN.

Belongs to the isocitrate and isopropylmalate dehydrogenases family. LeuB type 2 subfamily. Homodimer. Mg(2+) serves as cofactor. Mn(2+) is required as a cofactor.

The protein resides in the cytoplasm. It catalyses the reaction (2R,3S)-3-isopropylmalate + NAD(+) = 4-methyl-2-oxopentanoate + CO2 + NADH. Its pathway is amino-acid biosynthesis; L-leucine biosynthesis; L-leucine from 3-methyl-2-oxobutanoate: step 3/4. In terms of biological role, catalyzes the oxidation of 3-carboxy-2-hydroxy-4-methylpentanoate (3-isopropylmalate) to 3-carboxy-4-methyl-2-oxopentanoate. The product decarboxylates to 4-methyl-2 oxopentanoate. The protein is 3-isopropylmalate dehydrogenase of Bifidobacterium longum (strain DJO10A).